Consider the following 350-residue polypeptide: tRNA uridine(34) hydroxylase (350 aa).

The Rhodanese domain occupies 146-240 (DDPDAVFIDM…YARRARAQGL (95 aa)). Cys-200 (cysteine persulfide intermediate) is an active-site residue. Over residues 319 to 328 (RRRRAGRENG) the composition is skewed to basic and acidic residues. The segment at 319-350 (RRRRAGRENGNKIFNKSRGRLNSKLSIPDPAE) is disordered.

The protein belongs to the TrhO family.

It carries out the reaction uridine(34) in tRNA + AH2 + O2 = 5-hydroxyuridine(34) in tRNA + A + H2O. In terms of biological role, catalyzes oxygen-dependent 5-hydroxyuridine (ho5U) modification at position 34 in tRNAs. This Salmonella paratyphi B (strain ATCC BAA-1250 / SPB7) protein is tRNA uridine(34) hydroxylase.